The sequence spans 386 residues: Probable dual-specificity RNA methyltransferase RlmN (386 aa).

Catalysis depends on Glu123, which acts as the Proton acceptor. Residues 129-372 (YPTRTTLCIS…ATLRDTRGQD (244 aa)) enclose the Radical SAM core domain. A disulfide bridge links Cys136 with Cys377. [4Fe-4S] cluster contacts are provided by Cys143, Cys147, and Cys150. S-adenosyl-L-methionine contacts are provided by residues 198–199 (GE), Ser232, 255–257 (SLH), and Asn334. The active-site S-methylcysteine intermediate is the Cys377.

This sequence belongs to the radical SAM superfamily. RlmN family. The cofactor is [4Fe-4S] cluster.

The protein resides in the cytoplasm. It carries out the reaction adenosine(2503) in 23S rRNA + 2 reduced [2Fe-2S]-[ferredoxin] + 2 S-adenosyl-L-methionine = 2-methyladenosine(2503) in 23S rRNA + 5'-deoxyadenosine + L-methionine + 2 oxidized [2Fe-2S]-[ferredoxin] + S-adenosyl-L-homocysteine. The catalysed reaction is adenosine(37) in tRNA + 2 reduced [2Fe-2S]-[ferredoxin] + 2 S-adenosyl-L-methionine = 2-methyladenosine(37) in tRNA + 5'-deoxyadenosine + L-methionine + 2 oxidized [2Fe-2S]-[ferredoxin] + S-adenosyl-L-homocysteine. In terms of biological role, specifically methylates position 2 of adenine 2503 in 23S rRNA and position 2 of adenine 37 in tRNAs. The protein is Probable dual-specificity RNA methyltransferase RlmN of Bifidobacterium adolescentis (strain ATCC 15703 / DSM 20083 / NCTC 11814 / E194a).